Here is a 256-residue protein sequence, read N- to C-terminus: Acetylglutamate kinase (256 aa).

Residues 40–41 (GG), R62, and N154 each bind substrate.

The protein belongs to the acetylglutamate kinase family. ArgB subfamily.

The protein resides in the cytoplasm. It catalyses the reaction N-acetyl-L-glutamate + ATP = N-acetyl-L-glutamyl 5-phosphate + ADP. It functions in the pathway amino-acid biosynthesis; L-arginine biosynthesis; N(2)-acetyl-L-ornithine from L-glutamate: step 2/4. Functionally, catalyzes the ATP-dependent phosphorylation of N-acetyl-L-glutamate. This Staphylococcus aureus (strain bovine RF122 / ET3-1) protein is Acetylglutamate kinase.